Here is a 550-residue protein sequence, read N- to C-terminus: Atherin (550 aa).

A compositionally biased stretch (pro residues) spans 1–11; the sequence is MAGPPALPPPE. Disordered stretches follow at residues 1–32 and 93–468; these read MAGP…SPHY and SYRN…KEKP. A compositionally biased stretch (low complexity) spans 12–30; that stretch reads TAAAATTAAAAASSSAASP. The SAMD1-like winged helix (WH) domain occupies 24 to 100; the sequence is SSSAASPHYQ…SISYRNAARV (77 aa). At threonine 108 the chain carries Phosphothreonine. The segment covering 125 to 138 has biased composition (pro residues); the sequence is APPPTPAPPPPPAP. Residues 139–160 are compositionally biased toward low complexity; sequence VAAAAAPARAPRAAAAAAAATA. Serine 163 bears the Phosphoserine mark. Low complexity predominate over residues 170-179; it reads GPRAQRAAPL. 2 stretches are compositionally biased toward pro residues: residues 180–205 and 214–245; these read AAPP…PPPA and PLPP…PPPE. The span at 246 to 257 shows a compositional bias: low complexity; the sequence is GGAARAGGPARP. Serine 270 carries the post-translational modification Phosphoserine. Residues 290–300 are compositionally biased toward basic and acidic residues; that stretch reads AAARGRLERTR. The segment covering 337–355 has biased composition (acidic residues); it reads KEEEEEEEEDDEDDDDDVV. Residues 437-448 show a composition bias toward pro residues; sequence SPSPVPLPPGKP. The SAM domain maps to 474–542; the sequence is WTVMDVVEYF…KVLQQGHFED (69 aa).

In terms of assembly, homopolymerize into a closed pentameric ring. Interacts (via SAM domain) with L3MBTL3 (via SAM domain); the interaction mediates L3MBTL3 binding to chromatin. Interacts (via WH domain) with KDM1A; the interaction modulates KDM1A function.

The protein resides in the nucleus. Its subcellular location is the chromosome. The protein localises to the secreted. Its function is as follows. Unmethylated CpG islands (CGIs)-binding protein which localizes to H3K4me3-decorated CGIs, where it acts as a transcriptional repressor. Tethers L3MBTL3 to chromatin and interacts with the KDM1A histone demethylase complex to modulate H3K4me2 and H3K4me3 levels at CGIs. Plays a role in atherogenesis by binding with LDL on cell surface and promoting LDL oxidation which leads to the formation of foam cell. The polypeptide is Atherin (SAMD1) (Oryctolagus cuniculus (Rabbit)).